A 32-amino-acid chain; its full sequence is U5-ctenitoxin-Pn1a (32 aa).

3 disulfides stabilise this stretch: cysteine 3/cysteine 16, cysteine 9/cysteine 21, and cysteine 15/cysteine 30.

As to expression, expressed by the venom gland.

It localises to the secreted. Its function is as follows. Blocks voltage-gated sodium channels (Nav). Causes tail erection, scratching and a reduction in mobility at a dose level of 1.40 mg/mouse. The polypeptide is U5-ctenitoxin-Pn1a (Phoneutria nigriventer (Brazilian armed spider)).